Here is a 213-residue protein sequence, read N- to C-terminus: N-(5'-phosphoribosyl)anthranilate isomerase (213 aa).

Belongs to the TrpF family.

The catalysed reaction is N-(5-phospho-beta-D-ribosyl)anthranilate = 1-(2-carboxyphenylamino)-1-deoxy-D-ribulose 5-phosphate. It participates in amino-acid biosynthesis; L-tryptophan biosynthesis; L-tryptophan from chorismate: step 3/5. This chain is N-(5'-phosphoribosyl)anthranilate isomerase, found in Hahella chejuensis (strain KCTC 2396).